The primary structure comprises 394 residues: Mannosyl-3-phosphoglycerate synthase (394 aa).

The protein belongs to the glycosyltransferase 2 family. The cofactor is Mg(2+).

It is found in the cytoplasm. The catalysed reaction is (2R)-3-phosphoglycerate + GDP-alpha-D-mannose = 2-O-(alpha-D-mannosyl)-3-phosphoglycerate + GDP + H(+). Its pathway is carbohydrate biosynthesis; 2-(alpha-D-mannosyl)-D-glycerate biosynthesis; 2-(alpha-D-mannosyl)-D-glycerate from GDP-alpha-D-mannose (MPG route): step 1/2. Functionally, transfers a mannosyl group from GDP-mannose to phosphoglycerate to form mannosyl-3-phosphoglycerate (MPG). The enzyme is absolutely specific for GDP-mannose and 3-phosphoglycerate, and transfers the mannosyl group with retention of configuration. The polypeptide is Mannosyl-3-phosphoglycerate synthase (mngA) (Pyrococcus horikoshii (strain ATCC 700860 / DSM 12428 / JCM 9974 / NBRC 100139 / OT-3)).